A 2136-amino-acid polypeptide reads, in one-letter code: Protein Ycf2 (2136 aa).

Residue 1404–1411 (GPIETGRS) participates in ATP binding.

This sequence belongs to the Ycf2 family.

It is found in the plastid. The protein localises to the chloroplast stroma. Probable ATPase of unknown function. Its presence in a non-photosynthetic plant (Epifagus virginiana) and experiments in tobacco indicate that it has an essential function which is probably not related to photosynthesis. This Marchantia polymorpha (Common liverwort) protein is Protein Ycf2.